The following is a 226-amino-acid chain: N-(5'-phosphoribosyl)anthranilate isomerase (226 aa).

Belongs to the TrpF family.

It carries out the reaction N-(5-phospho-beta-D-ribosyl)anthranilate = 1-(2-carboxyphenylamino)-1-deoxy-D-ribulose 5-phosphate. The protein operates within amino-acid biosynthesis; L-tryptophan biosynthesis; L-tryptophan from chorismate: step 3/5. In Candida albicans (strain SC5314 / ATCC MYA-2876) (Yeast), this protein is N-(5'-phosphoribosyl)anthranilate isomerase (TRP1).